Here is a 212-residue protein sequence, read N- to C-terminus: Chloramphenicol acetyltransferase (212 aa).

His-186 (proton acceptor) is an active-site residue.

It belongs to the chloramphenicol acetyltransferase family. In terms of assembly, homotrimer.

It carries out the reaction chloramphenicol + acetyl-CoA = chloramphenicol 3-acetate + CoA. Functionally, this enzyme is an effector of chloramphenicol resistance in bacteria. In Clostridioides difficile (Peptoclostridium difficile), this protein is Chloramphenicol acetyltransferase (catD).